The sequence spans 458 residues: UDP-glycosyltransferase 76G1 (458 aa).

His25 acts as the Proton acceptor in catalysis. His25 serves as a coordination point for rebaudioside A. Residue His25 participates in rubusoside binding. Residue Asn27 coordinates UDP. Asp124 serves as the catalytic Charge relay. Rebaudioside A is bound by residues Thr146–Ser147 and His155. UDP contacts are provided by residues Ser283, Trp338 to Val339, and His356 to Glu364. Rebaudioside A contacts are provided by residues Trp359 and Asp380 to Gln381.

This sequence belongs to the UDP-glycosyltransferase family. In terms of assembly, monomer.

The catalysed reaction is steviolbioside + UDP-alpha-D-glucose = rebaudioside B + UDP + H(+). The enzyme catalyses stevioside + UDP-alpha-D-glucose = rebaudioside A + UDP + H(+). It catalyses the reaction rebaudioside E + UDP-alpha-D-glucose = rebaudioside D + UDP + H(+). It carries out the reaction rebaudioside D + UDP-alpha-D-glucose = rebaudioside M + UDP + H(+). Functionally, involved in the biosynthesis of steviol glycosides in leaves. Converts the di-glycoside steviolbioside to the tri-glycoside rebaudioside B. Converts the tri-glycoside stevioside to the tetra-glycoside rebaudioside A. Converts the tetra-glycoside rebaudioside E to the penta-glycoside rebaudioside D. Converts the penta-glycoside rebaudioside D to the hexa-glycoside rebaudioside M. Can glucosylate rubusoside and rebaudioside A in vitro. The chain is UDP-glycosyltransferase 76G1 from Stevia rebaudiana (Stevia).